A 277-amino-acid polypeptide reads, in one-letter code: Large ribosomal subunit protein uL2 (277 aa).

The segment at 219-277 (TVRGSVMNPNDHPHGGGEGKAPVGRKAPSTPWGKPALGLKTRNKKAKSDKLIVRRRNEK) is disordered. Residues 264 to 277 (AKSDKLIVRRRNEK) show a composition bias toward basic and acidic residues.

The protein belongs to the universal ribosomal protein uL2 family. Part of the 50S ribosomal subunit. Forms a bridge to the 30S subunit in the 70S ribosome.

Its function is as follows. One of the primary rRNA binding proteins. Required for association of the 30S and 50S subunits to form the 70S ribosome, for tRNA binding and peptide bond formation. It has been suggested to have peptidyltransferase activity; this is somewhat controversial. Makes several contacts with the 16S rRNA in the 70S ribosome. This is Large ribosomal subunit protein uL2 from Streptococcus sanguinis (strain SK36).